The chain runs to 90 residues: c-Myc-binding protein homolog (90 aa).

This sequence belongs to the AMY1 family.

The protein resides in the nucleus. This chain is c-Myc-binding protein homolog (mycbp), found in Dictyostelium discoideum (Social amoeba).